We begin with the raw amino-acid sequence, 983 residues long: Bifunctional glutamine synthetase adenylyltransferase/adenylyl-removing enzyme (983 aa).

The segment at 1 to 468 is adenylyl removase; that stretch reads MTVENAKALF…KQYAALFEQA (468 aa). The adenylyl transferase stretch occupies residues 473–983; that stretch reads AASGNLVFTG…FDKLVGHGAD (511 aa).

The protein belongs to the GlnE family. The cofactor is Mg(2+).

The catalysed reaction is [glutamine synthetase]-O(4)-(5'-adenylyl)-L-tyrosine + phosphate = [glutamine synthetase]-L-tyrosine + ADP. It carries out the reaction [glutamine synthetase]-L-tyrosine + ATP = [glutamine synthetase]-O(4)-(5'-adenylyl)-L-tyrosine + diphosphate. Its function is as follows. Involved in the regulation of glutamine synthetase GlnA, a key enzyme in the process to assimilate ammonia. When cellular nitrogen levels are high, the C-terminal adenylyl transferase (AT) inactivates GlnA by covalent transfer of an adenylyl group from ATP to specific tyrosine residue of GlnA, thus reducing its activity. Conversely, when nitrogen levels are low, the N-terminal adenylyl removase (AR) activates GlnA by removing the adenylyl group by phosphorolysis, increasing its activity. The regulatory region of GlnE binds the signal transduction protein PII (GlnB) which indicates the nitrogen status of the cell. The polypeptide is Bifunctional glutamine synthetase adenylyltransferase/adenylyl-removing enzyme (Brucella melitensis biotype 1 (strain ATCC 23456 / CCUG 17765 / NCTC 10094 / 16M)).